A 305-amino-acid chain; its full sequence is Phosphoribosylaminoimidazole-succinocarboxamide synthase (305 aa).

It belongs to the SAICAR synthetase family.

The enzyme catalyses 5-amino-1-(5-phospho-D-ribosyl)imidazole-4-carboxylate + L-aspartate + ATP = (2S)-2-[5-amino-1-(5-phospho-beta-D-ribosyl)imidazole-4-carboxamido]succinate + ADP + phosphate + 2 H(+). The protein operates within purine metabolism; IMP biosynthesis via de novo pathway; 5-amino-1-(5-phospho-D-ribosyl)imidazole-4-carboxamide from 5-amino-1-(5-phospho-D-ribosyl)imidazole-4-carboxylate: step 1/2. In Polaromonas naphthalenivorans (strain CJ2), this protein is Phosphoribosylaminoimidazole-succinocarboxamide synthase.